The primary structure comprises 530 residues: UDP-glucuronosyltransferase 2B7 (530 aa).

An N-terminal signal peptide occupies residues 1–17 (MPQKWISALLLLQISFC). Asn-316 carries an N-linked (GlcNAc...) asparagine glycan. Residues 374-380 (THGGANG) and Glu-400 contribute to the UDP-alpha-D-glucuronate site. Residues 496–516 (IGFLLACVLAIVLLAVKCCLF) traverse the membrane as a helical segment.

This sequence belongs to the UDP-glycosyltransferase family.

It localises to the endoplasmic reticulum membrane. It catalyses the reaction glucuronate acceptor + UDP-alpha-D-glucuronate = acceptor beta-D-glucuronoside + UDP + H(+). It carries out the reaction 17alpha-estradiol + UDP-alpha-D-glucuronate = 17alpha-estradiol 17-O-(beta-D-glucuronate) + UDP + H(+). The enzyme catalyses 17beta-estradiol + UDP-alpha-D-glucuronate = 17beta-estradiol 17-O-(beta-D-glucuronate) + UDP + H(+). The catalysed reaction is 2-hydroxy-17beta-estradiol + UDP-alpha-D-glucuronate = 2-hydroxy-17beta-estradiol 3-O-(beta-D-glucuronate) + UDP + H(+). It catalyses the reaction 4-hydroxy-17beta-estradiol + UDP-alpha-D-glucuronate = 17beta-estradiol 4-O-(beta-D-glucuronate) + UDP + H(+). It carries out the reaction 4-hydroxyestrone + UDP-alpha-D-glucuronate = estrone 4-O-(beta-D-glucuronate) + UDP + H(+). The enzyme catalyses 16alpha-hydroxyestrone + UDP-alpha-D-glucuronate = 16alpha-hydroxyestrone 16-O-(beta-D-glucuronate) + UDP + H(+). The catalysed reaction is 16alpha,17beta-estriol + UDP-alpha-D-glucuronate = 16alpha,17beta-estriol 16-O-(beta-D-glucuronate) + UDP + H(+). It catalyses the reaction 16beta,17beta-estriol + UDP-alpha-D-glucuronate = 16beta,17beta-estriol 16-O-(beta-D-glucuronate) + UDP + H(+). It carries out the reaction 16alpha,17alpha-estriol + UDP-alpha-D-glucuronate = 16alpha,17alpha-estriol 16-O-(beta-D-glucuronate) + UDP + H(+). The enzyme catalyses 16alpha,17alpha-estriol + UDP-alpha-D-glucuronate = 16alpha,17alpha-estriol 17-O-(beta-D-glucuronate) + UDP + H(+). The catalysed reaction is epitestosterone + UDP-alpha-D-glucuronate = epitestosterone 17-O-(beta-D-glucuronate) + UDP + H(+). It catalyses the reaction hyodeoxycholate + UDP-alpha-D-glucuronate = hyodeoxycholate 6-O-(beta-D-glucuronate) + UDP + H(+). It carries out the reaction hyocholate + UDP-alpha-D-glucuronate = hyocholate 6-O-(beta-D-glucuronate) + UDP + H(+). The enzyme catalyses all-trans-retinoate + UDP-alpha-D-glucuronate = all-trans-retinoyl-1-O-(beta-D-glucuronate) + UDP. The catalysed reaction is all-trans-4-hydroxyretinoate + UDP-alpha-D-glucuronate = all-trans-4-hydroxy-4-O-(beta-D-glucuronide)-retinoate + UDP + H(+). It catalyses the reaction (E)-ferulate + UDP-alpha-D-glucuronate = (E)-ferulic acid beta-D-glucuronate ester + UDP. It carries out the reaction 8-iso-prostaglandin F2alpha + UDP-alpha-D-glucuronate = 8-iso-prostaglandin F2alpha-glucuronide + UDP + H(+). The enzyme catalyses 5-epi-5-F2t-IsoP + UDP-alpha-D-glucuronate = 5-epi-5-F2t-IsoP-glucuronide + UDP + H(+). The catalysed reaction is (5Z,8Z,11Z,14Z)-eicosatetraenoate + UDP-alpha-D-glucuronate = O-[(5Z),(8Z),(11Z),(14Z)-eicosatetraenoyl]-beta-D-glucuronate + UDP. It catalyses the reaction 15-hydroxy-(5Z,8Z,11Z,13E)-eicosatetraenoate + UDP-alpha-D-glucuronate = 15-O-(beta-D-glucuronosyl)-(5Z,8Z,11Z,14Z)-eicosatetraenoate + UDP + H(+). It carries out the reaction 20-hydroxy-(5Z,8Z,11Z,14Z)-eicosatetraenoate + UDP-alpha-D-glucuronate = 20-O-(beta-D-glucuronosyl)-(5Z,8Z,11Z,14Z)-eicosatetraenoate + UDP + H(+). The enzyme catalyses (E)-ferulate + UDP-alpha-D-glucuronate = (E)-4-O-(beta-D-glucuronosyl)-ferulate + UDP + H(+). The catalysed reaction is prostaglandin B1 + UDP-alpha-D-glucuronate = 15-O-(beta-D-glucuronosyl)-prostaglandin B1 + UDP + H(+). It catalyses the reaction mycophenolate + UDP-alpha-D-glucuronate = mycophenolic acid O-acyl-beta-D-glucuronide + UDP. It carries out the reaction losartan + UDP-alpha-D-glucuronate = losartan-2-N-beta-D-glucuronide + UDP. The enzyme catalyses candesartan + UDP-alpha-D-glucuronate = candesartan O-beta-D-glucuronoside + UDP. The catalysed reaction is candesartan + UDP-alpha-D-glucuronate = candesartan-2-N-beta-D-glucuronide + UDP. It catalyses the reaction zolasartan + UDP-alpha-D-glucuronate = zolarsartan O-beta-D-glucuronoside + UDP. UDP-glucuronosyltransferase (UGT) that catalyzes phase II biotransformation reactions in which lipophilic substrates are conjugated with glucuronic acid to increase the metabolite's water solubility, thereby facilitating excretion into either the urine or bile. Essential for the elimination and detoxification of drugs, xenobiotics and endogenous compounds. Catalyzes the glucuronidation of endogenous steroid hormones such as androgens (epitestosterone, androsterone) and estrogens (estradiol, epiestradiol, estriol, catechol estrogens). Also regulates the levels of retinoic acid, a major metabolite of vitamin A involved in apoptosis, cellular growth and differentiation, and embryonic development. Contributes to bile acid (BA) detoxification by catalyzing the glucuronidation of BA substrates, which are natural detergents for dietary lipids absorption. Involved in the glucuronidation of arachidonic acid (AA) and AA-derived eicosanoids including 15-HETE, 20-HETE, PGE2, PGB1 and F2-isoprostanes (8-iso-PGF2alpha and 5-epi-5-F2t-IsoP). Involved in the glucuronidation of the phytochemical ferulic acid at the phenolic or the carboxylic acid group. Involved in the glucuronidation of the AGTR1 angiotensin receptor antagonist losartan, caderastan and zolarsatan, drugs which can inhibit the effect of angiotensin II. Also metabolizes mycophenolate, an immunosuppressive agent. The chain is UDP-glucuronosyltransferase 2B7 from Rattus norvegicus (Rat).